A 95-amino-acid polypeptide reads, in one-letter code: Aspartyl/glutamyl-tRNA(Asn/Gln) amidotransferase subunit C (95 aa).

Belongs to the GatC family. Heterotrimer of A, B and C subunits.

It catalyses the reaction L-glutamyl-tRNA(Gln) + L-glutamine + ATP + H2O = L-glutaminyl-tRNA(Gln) + L-glutamate + ADP + phosphate + H(+). The enzyme catalyses L-aspartyl-tRNA(Asn) + L-glutamine + ATP + H2O = L-asparaginyl-tRNA(Asn) + L-glutamate + ADP + phosphate + 2 H(+). Functionally, allows the formation of correctly charged Asn-tRNA(Asn) or Gln-tRNA(Gln) through the transamidation of misacylated Asp-tRNA(Asn) or Glu-tRNA(Gln) in organisms which lack either or both of asparaginyl-tRNA or glutaminyl-tRNA synthetases. The reaction takes place in the presence of glutamine and ATP through an activated phospho-Asp-tRNA(Asn) or phospho-Glu-tRNA(Gln). The sequence is that of Aspartyl/glutamyl-tRNA(Asn/Gln) amidotransferase subunit C from Bradyrhizobium diazoefficiens (strain JCM 10833 / BCRC 13528 / IAM 13628 / NBRC 14792 / USDA 110).